A 327-amino-acid chain; its full sequence is MAQALEDGNPLPKASNRPAESEAPSDPQIKDNHCLGRYKVQAVRDSANLSQERIFHSALTVSGASWARRRGELRELLGLQGAAPAGWLSEEHLEPAVPGSRRSSGQGSSRVCLEPREHAWILAAAECRFEVLLEMLEAEPSLLMREDPITGYSVLHWLAKHGRHEELILLHDFARRRGLPFDVSAPGSGGLTPLHLAALQGHDMVIKVLVGALGADPSRRDHSGNRPCHYLRPDASLNLRELSGAEEWEIERDRKRENANNNSSRTTTTTTTTSRWLKRTPSASCIKSTGVHYKEASQPVKEKKASSTQEGQGRCLRRYLFPFTQNR.

Residues 1–31 (MAQALEDGNPLPKASNRPAESEAPSDPQIKD) are disordered. ANK repeat units lie at residues 112-141 (CLEP…AEPS), 147-162 (DPIT…AKHG), and 186-216 (PGSG…LGAD). The segment at 251–311 (ERDRKRENAN…EKKASSTQEG (61 aa)) is disordered. Over residues 260–275 (NNNSSRTTTTTTTTSR) the composition is skewed to low complexity. The span at 292-305 (HYKEASQPVKEKKA) shows a compositional bias: basic and acidic residues.

It belongs to the SOWAH family.

The protein is Ankyrin repeat domain-containing protein SOWAHD (Sowahd) of Mus musculus (Mouse).